We begin with the raw amino-acid sequence, 198 residues long: MVNYPHKLSSQKRQPSLSQPKNFANRGMSFEKMINATNDYYLSQGLAVIHKKPTPIQIVRVDYPQRSRAKIVEAYFRQASTTDYSGVYNGYYIDFEAKETKQKRAIPMKNFHPHQIQHMEQILAQQGICFVLLHFSSQQETYLLPAYDLIRFYHQDKGQKSMPLGYIREYGYEIKAGAFPQIPYLNVIKEHLLGGKTR.

Residues 1–21 (MVNYPHKLSSQKRQPSLSQPK) are disordered. Polar residues predominate over residues 11–21 (QKRQPSLSQPK). The Mg(2+) site is built by threonine 81, aspartate 83, glutamate 96, and glutamine 115.

This sequence belongs to the RecU family. Mg(2+) serves as cofactor.

Its subcellular location is the cytoplasm. The enzyme catalyses Endonucleolytic cleavage at a junction such as a reciprocal single-stranded crossover between two homologous DNA duplexes (Holliday junction).. Endonuclease that resolves Holliday junction intermediates in genetic recombination. Cleaves mobile four-strand junctions by introducing symmetrical nicks in paired strands. Promotes annealing of linear ssDNA with homologous dsDNA. Required for DNA repair, homologous recombination and chromosome segregation. This Streptococcus pneumoniae (strain Taiwan19F-14) protein is Holliday junction resolvase RecU.